A 242-amino-acid polypeptide reads, in one-letter code: Small ribosomal subunit protein eS6 (242 aa).

The span at 219 to 229 (EKKSEKAEEKK) shows a compositional bias: basic and acidic residues. Positions 219–242 (EKKSEKAEEKKRRASSLRTQSVQA) are disordered. Serine 233 and serine 234 each carry phosphoserine.

This sequence belongs to the eukaryotic ribosomal protein eS6 family. Post-translationally, phosphorylated.

The chain is Small ribosomal subunit protein eS6 (RPS6) from Yarrowia lipolytica (strain CLIB 122 / E 150) (Yeast).